A 330-amino-acid chain; its full sequence is tRNA-modifying protein YgfZ (330 aa).

Residues tryptophan 28 and tryptophan 190 each contribute to the folate site.

Belongs to the tRNA-modifying YgfZ family.

The protein resides in the cytoplasm. Folate-binding protein involved in regulating the level of ATP-DnaA and in the modification of some tRNAs. It is probably a key factor in regulatory networks that act via tRNA modification, such as initiation of chromosomal replication. This is tRNA-modifying protein YgfZ from Yersinia pestis bv. Antiqua (strain Antiqua).